The chain runs to 164 residues: Zinc finger protein ZAT8 (164 aa).

2 C2H2-type zinc fingers span residues 37-59 and 85-107; these read FRCK…RASH and HPCP…MRRH.

The protein resides in the nucleus. Functionally, probable transcription factor that may be involved in stress responses. This Arabidopsis thaliana (Mouse-ear cress) protein is Zinc finger protein ZAT8 (ZAT8).